The chain runs to 313 residues: ADP-L-glycero-D-manno-heptose-6-epimerase (313 aa).

NADP(+)-binding positions include 10 to 11 (MI), 31 to 32 (DN), Lys38, Arg53, 75 to 79 (EGACS), and Asn92. The active-site Proton acceptor is the Tyr139. Residue Lys143 coordinates NADP(+). Substrate is bound at residue Asn174. Val175 and Lys183 together coordinate NADP(+). The Proton acceptor role is filled by Lys183. Substrate is bound by residues Ser185, His192, 206-209 (FAGS), Arg214, and Tyr277.

This sequence belongs to the NAD(P)-dependent epimerase/dehydratase family. HldD subfamily. As to quaternary structure, homopentamer. Requires NADP(+) as cofactor.

It catalyses the reaction ADP-D-glycero-beta-D-manno-heptose = ADP-L-glycero-beta-D-manno-heptose. It participates in nucleotide-sugar biosynthesis; ADP-L-glycero-beta-D-manno-heptose biosynthesis; ADP-L-glycero-beta-D-manno-heptose from D-glycero-beta-D-manno-heptose 7-phosphate: step 4/4. It functions in the pathway bacterial outer membrane biogenesis; LPS core biosynthesis. In terms of biological role, catalyzes the interconversion between ADP-D-glycero-beta-D-manno-heptose and ADP-L-glycero-beta-D-manno-heptose via an epimerization at carbon 6 of the heptose. The sequence is that of ADP-L-glycero-D-manno-heptose-6-epimerase from Vibrio vulnificus (strain YJ016).